The following is a 416-amino-acid chain: MSSNCTSTTAVAVAPLSASKTKTKKKHFVCQKVKLFRASEPILSVLMWGVNHTINELSNVPVPVMLMPDDFKAYSKIKVDNHLFNKENLPSRFKFKEYCPMVFRNLRERFGIDDQDYQNSVTRSAPINSDSQGRCGTRFLTTYDRRFVIKTVSSEDVAEMHNILKKYHQFIVECHGNTLLPQFLGMYRLTVDGVETYMVVTRNVFSHRLTVHRKYDLKGSTVAREASDKEKAKDLPTFKDNDFLNEGQKLHVGEESKKNFLEKLKRDVEFLAQLKIMDYSLLVGIHDVDRAEQEEMEVEERAEEEECENDGVGGSLLCSYGTPPDSPGNLLSFPRFFGPGEFDPSVDVYAMKSHESAPKKEVYFMAIIDILTPYDAKKKAAHAAKTVKHGAGAEISTVNPEQYSKRFNEFMSNILT.

Ser-2 carries the post-translational modification N-acetylserine. Thr-8 is subject to Phosphothreonine. Ser-19 is subject to Phosphoserine. Residues 38–415 (ASEPILSVLM…RFNEFMSNIL (378 aa)) enclose the PIPK domain. Residues 64–70 (VMLMPDD) form a required for interaction with PIP5K1A region. Residues Lys-94 and Lys-150 each carry the N6-acetyllysine modification. ATP contacts are provided by residues 202–204 (RNV) and Lys-214. GTP is bound by residues 203-204 (NV) and Lys-214. The residue at position 322 (Thr-322) is a Phosphothreonine. Ser-326 is modified (phosphoserine). Asp-369 is a binding site for GTP.

In terms of assembly, homodimer. Binds TNFRSF1A. Interacts with PIP4K2A; the interaction suppresses ubiquitination by the SPOP/CUL3 complex. Probably interacts with PIP5K1A; the interaction inhibits PIP5K1A kinase activity. Ubiquitinated by the SPOP/CUL3 complex. Ubiquitination is stimulated by PtdIns5P levels. In terms of processing, phosphorylated on serine residues.

The protein resides in the endoplasmic reticulum membrane. Its subcellular location is the cell membrane. The protein localises to the nucleus. It localises to the cytoplasm. The enzyme catalyses a 1,2-diacyl-sn-glycero-3-phospho-(1D-myo-inositol-5-phosphate) + ATP = a 1,2-diacyl-sn-glycero-3-phospho-(1D-myo-inositol-4,5-bisphosphate) + ADP + H(+). It carries out the reaction 1,2-dihexadecanoyl-sn-glycero-3-phospho-(1D-myo-inositol-5-phosphate) + ATP = 1,2-dihexadecanoyl-sn-glycero-3-phospho-(1D-myo-inositol-4,5-bisphosphate) + ADP + H(+). The catalysed reaction is 1,2-dihexadecanoyl-sn-glycero-3-phospho-(1D-myo-inositol-5-phosphate) + GTP = 1,2-dihexadecanoyl-sn-glycero-3-phospho-(1D-myo-inositol-4,5-bisphosphate) + GDP + H(+). Functionally, participates in the biosynthesis of phosphatidylinositol 4,5-bisphosphate. Preferentially utilizes GTP, rather than ATP, for PI(5)P phosphorylation and its activity reflects changes in direct proportion to the physiological GTP concentration. Its GTP-sensing activity is critical for metabolic adaptation. In collaboration with PIP4K2A, has a role in mediating autophagy in times of nutrient stress. Required for autophagosome-lysosome fusion and the regulation of cellular lipid metabolism. PIP4Ks negatively regulate insulin signaling through a catalytic-independent mechanism. They interact with PIP5Ks and suppress PIP5K-mediated PtdIns(4,5)P2 synthesis and insulin-dependent conversion to PtdIns(3,4,5)P3. The protein is Phosphatidylinositol 5-phosphate 4-kinase type-2 beta of Mus musculus (Mouse).